Here is a 640-residue protein sequence, read N- to C-terminus: Chaperone protein HtpG (640 aa).

The interval 1 to 343 (MQTAENVEHL…SNDLPLNVSR (343 aa)) is a; substrate-binding. Residues 344-564 (EILQESKDID…THDMSGNLGR (221 aa)) form a b region. The c stretch occupies residues 565-640 (LLKSAGQKVP…LLLQNILSGK (76 aa)).

Belongs to the heat shock protein 90 family. As to quaternary structure, homodimer.

The protein resides in the cytoplasm. Functionally, molecular chaperone. Has ATPase activity. This Nitrosomonas eutropha (strain DSM 101675 / C91 / Nm57) protein is Chaperone protein HtpG.